The chain runs to 507 residues: ATP synthase subunit alpha, chloroplastic (507 aa).

Residue 170–177 (GDRQTGKT) participates in ATP binding.

This sequence belongs to the ATPase alpha/beta chains family. F-type ATPases have 2 components, CF(1) - the catalytic core - and CF(0) - the membrane proton channel. CF(1) has five subunits: alpha(3), beta(3), gamma(1), delta(1), epsilon(1). CF(0) has four main subunits: a, b, b' and c.

Its subcellular location is the plastid. It localises to the chloroplast thylakoid membrane. It catalyses the reaction ATP + H2O + 4 H(+)(in) = ADP + phosphate + 5 H(+)(out). In terms of biological role, produces ATP from ADP in the presence of a proton gradient across the membrane. The alpha chain is a regulatory subunit. The chain is ATP synthase subunit alpha, chloroplastic from Chloranthus spicatus (Chulantree).